Here is a 202-residue protein sequence, read N- to C-terminus: Na(+)-translocating NADH-quinone reductase subunit E (202 aa).

A run of 6 helical transmembrane segments spans residues 11 to 31 (AIFVENMALAFFLGMCTFLAI), 35 to 55 (IEAATGLGIAVVVVLTVTVPV), 81 to 101 (FLGLLTYIGVIAAIVQIMEMV), 114 to 134 (GVFLPLITVNCAILGASLFMV), 144 to 164 (LVYGFGAGVGWALAIIALAGI), and 180 to 200 (LGITFITVGLMSLGFMSFSGI).

It belongs to the NqrDE/RnfAE family. Composed of six subunits; NqrA, NqrB, NqrC, NqrD, NqrE and NqrF.

It is found in the cell inner membrane. It carries out the reaction a ubiquinone + n Na(+)(in) + NADH + H(+) = a ubiquinol + n Na(+)(out) + NAD(+). Functionally, NQR complex catalyzes the reduction of ubiquinone-1 to ubiquinol by two successive reactions, coupled with the transport of Na(+) ions from the cytoplasm to the periplasm. NqrA to NqrE are probably involved in the second step, the conversion of ubisemiquinone to ubiquinol. In Marinobacter nauticus (strain ATCC 700491 / DSM 11845 / VT8) (Marinobacter aquaeolei), this protein is Na(+)-translocating NADH-quinone reductase subunit E.